The chain runs to 571 residues: Proline--tRNA ligase (571 aa).

The protein belongs to the class-II aminoacyl-tRNA synthetase family. ProS type 1 subfamily. As to quaternary structure, homodimer.

It is found in the cytoplasm. The enzyme catalyses tRNA(Pro) + L-proline + ATP = L-prolyl-tRNA(Pro) + AMP + diphosphate. In terms of biological role, catalyzes the attachment of proline to tRNA(Pro) in a two-step reaction: proline is first activated by ATP to form Pro-AMP and then transferred to the acceptor end of tRNA(Pro). As ProRS can inadvertently accommodate and process non-cognate amino acids such as alanine and cysteine, to avoid such errors it has two additional distinct editing activities against alanine. One activity is designated as 'pretransfer' editing and involves the tRNA(Pro)-independent hydrolysis of activated Ala-AMP. The other activity is designated 'posttransfer' editing and involves deacylation of mischarged Ala-tRNA(Pro). The misacylated Cys-tRNA(Pro) is not edited by ProRS. This Proteus mirabilis (strain HI4320) protein is Proline--tRNA ligase.